The sequence spans 310 residues: MSTTAITILGTGVWGSALGTLAQANHHTVTAWSRRGPLTLTQSLAQAQVLVVAISMKGIPDLAAQLQQLKLPTSTIIVSATKGLDPATLRTPSQIWQATFPNNPVLVLSGPNLSKEIEQRLPAATVVAGPNQAAVETVQQLFSSDCFRVYTNPDQLGTELGGTLKNVIAISVGVCEGLKLGTNARAALITRALPEMIRVGTHLGGQAETFFGLSGLGDLLATCTSPLSRNYQVGYQLAQGKSLPEILDQLHGTAEGVNTTNVLVDLANREGIPIPIARQVHRLLKGRITPQEALESLMDRELKPEACDLL.

Tryptophan 14, arginine 34, arginine 35, and lysine 82 together coordinate NADPH. Sn-glycerol 3-phosphate is bound by residues lysine 82 and glycine 110. Serine 114 is an NADPH binding site. Sn-glycerol 3-phosphate-binding residues include lysine 165, aspartate 218, serine 228, arginine 229, and asparagine 230. Lysine 165 acts as the Proton acceptor in catalysis. Arginine 229 serves as a coordination point for NADPH. Position 255 (glutamate 255) interacts with NADPH.

The protein belongs to the NAD-dependent glycerol-3-phosphate dehydrogenase family.

The protein resides in the cytoplasm. It catalyses the reaction sn-glycerol 3-phosphate + NAD(+) = dihydroxyacetone phosphate + NADH + H(+). It carries out the reaction sn-glycerol 3-phosphate + NADP(+) = dihydroxyacetone phosphate + NADPH + H(+). It participates in membrane lipid metabolism; glycerophospholipid metabolism. In terms of biological role, catalyzes the reduction of the glycolytic intermediate dihydroxyacetone phosphate (DHAP) to sn-glycerol 3-phosphate (G3P), the key precursor for phospholipid synthesis. This is Glycerol-3-phosphate dehydrogenase [NAD(P)+] from Acaryochloris marina (strain MBIC 11017).